Consider the following 62-residue polypeptide: Sperm histone (62 aa).

The tract at residues 1–62 (MARYRRSRTR…GSRRRRRRRY (62 aa)) is disordered. Position 9 is a phosphothreonine (threonine 9).

This sequence belongs to the protamine P1 family. Testis.

The protein localises to the nucleus. It is found in the chromosome. Protamines substitute for histones in the chromatin of sperm during the haploid phase of spermatogenesis. They compact sperm DNA into a highly condensed, stable and inactive complex. The polypeptide is Sperm histone (Gallus gallus (Chicken)).